Consider the following 51-residue polypeptide: MVAYWRQAGLSYIRYSQICAKAVRDALKTEFKANAMKTSGSTIKIVKVKKE.

Lys21, Lys32, and Lys37 each carry N6-acetyllysine; alternate. N6-succinyllysine; alternate occurs at positions 21, 32, and 37. Lys44 is modified (N6-acetyllysine).

This sequence belongs to the eukaryotic ATPase epsilon family. As to quaternary structure, component of the ATP synthase complex composed at least of ATP5F1A/subunit alpha, ATP5F1B/subunit beta, ATP5MC1/subunit c (homooctomer), MT-ATP6/subunit a, MT-ATP8/subunit 8, ATP5ME/subunit e, ATP5MF/subunit f, ATP5MG/subunit g, ATP5MK/subunit k, ATP5MJ/subunit j, ATP5F1C/subunit gamma, ATP5F1D/subunit delta, ATP5F1E/subunit epsilon, ATP5PF/subunit F6, ATP5PB/subunit b, ATP5PD/subunit d, ATP5PO/subunit OSCP. ATP synthase complex consists of a soluble F(1) head domain (subunits alpha(3) and beta(3)) - the catalytic core - and a membrane F(0) domain - the membrane proton channel (subunits c, a, 8, e, f, g, k and j). These two domains are linked by a central stalk (subunits gamma, delta, and epsilon) rotating inside the F1 region and a stationary peripheral stalk (subunits F6, b, d, and OSCP).

It localises to the mitochondrion. It is found in the mitochondrion inner membrane. Functionally, subunit epsilon, of the mitochondrial membrane ATP synthase complex (F(1)F(0) ATP synthase or Complex V) that produces ATP from ADP in the presence of a proton gradient across the membrane which is generated by electron transport complexes of the respiratory chain. ATP synthase complex consist of a soluble F(1) head domain - the catalytic core - and a membrane F(1) domain - the membrane proton channel. These two domains are linked by a central stalk rotating inside the F(1) region and a stationary peripheral stalk. During catalysis, ATP synthesis in the catalytic domain of F(1) is coupled via a rotary mechanism of the central stalk subunits to proton translocation. In vivo, can only synthesize ATP although its ATP hydrolase activity can be activated artificially in vitro. May be essential for the assembly of F(1) and may play an important role in the incorporation of the hydrophobic subunit c into the F(1)-c oligomer rotor of the mitochondrial ATP synthase complex. The polypeptide is ATP synthase F(1) complex subunit epsilon, mitochondrial (Bos taurus (Bovine)).